An 808-amino-acid chain; its full sequence is Na(+)/H(+) antiporter 2 (808 aa).

9 helical membrane-spanning segments follow: residues 12-32 (HVAY…SLFV), 36-56 (LYIG…PHCL), 70-90 (ITLE…SVEL), 105-125 (LLVP…WILV), 128-148 (LNFP…PVLA), 174-194 (CNDG…LYPG), 203-223 (WICV…CIIG), 244-264 (FLAF…MLGV), and 267-287 (LLVS…AAKT). N-linked (GlcNAc...) asparagine glycosylation is present at Asn291. 5 helical membrane passes run 294–314 (NVID…ILPW), 319–339 (NPDI…VIFL), 361–381 (AMFI…AITS), 409–429 (VMAC…IVHG), and 432–452 (VAVI…LPTG). 2 disordered regions span residues 478-499 (QRLD…SGMV) and 541-562 (HAST…NGRA). A compositionally biased stretch (polar residues) spans 542 to 561 (ASTNDSHGTTTANLGTSNGR). N-linked (GlcNAc...) asparagine glycans are attached at residues Asn545 and Asn602. Residues 774 to 808 (LHSEDEMADDEAESENDMDYEDSDGPASRFKDHAD) form a disordered region. A compositionally biased stretch (acidic residues) spans 779 to 797 (EMADDEAESENDMDYEDSD).

Belongs to the fungal Na(+)/H(+) exchanger family.

Its subcellular location is the membrane. Its function is as follows. Sodium export from cell, takes up external protons in exchange for internal sodium ions. Seems to be poorly expressed. The protein is Na(+)/H(+) antiporter 2 (SOD22) of Zygosaccharomyces rouxii.